A 146-amino-acid chain; its full sequence is Hut operon positive regulatory protein (146 aa).

It belongs to the HutP family. In terms of assembly, homohexamer.

Functionally, antiterminator that binds to cis-acting regulatory sequences on the mRNA in the presence of histidine, thereby suppressing transcription termination and activating the hut operon for histidine utilization. The sequence is that of Hut operon positive regulatory protein from Bacillus anthracis (strain CDC 684 / NRRL 3495).